Here is a 459-residue protein sequence, read N- to C-terminus: Nuclear distribution protein PAC1-2 (459 aa).

The stretch at 56-83 forms a coiled coil; sequence TSIVRLQKKIMDLESRNAALQTELANLT. WD repeat units follow at residues 108-149, 151-191, 195-244, 246-284, 306-348, 350-389, 394-438, and 440-459; these read SHRD…RTVK, HTRA…KNIR, GHDH…KTLR, HTAWVRDVCPSFDGRFLLSAGDDMTTRLWNISGSNSDHK, QYLA…LGTL, GHDNWVRALAFHPGGKYLLSVSDDKTLRCWDLSQGGKCVK, AHER…DTPD, and QVRCVIATGGVDKKLQVFAD.

Belongs to the WD repeat LIS1/nudF family. As to quaternary structure, self-associates. Interacts with NDL1 and dynein.

The protein localises to the cytoplasm. It localises to the cytoskeleton. Its subcellular location is the spindle pole. Positively regulates the activity of the minus-end directed microtubule motor protein dynein. May enhance dynein-mediated microtubule sliding by targeting dynein to the microtubule plus end. Required for nuclear migration during vegetative growth as well as development. Required for retrograde early endosome (EE) transport from the hyphal tip. Required for localization of dynein to the mitotic spindle poles. Recruits additional proteins to the dynein complex at SPBs. The polypeptide is Nuclear distribution protein PAC1-2 (Uncinocarpus reesii (strain UAMH 1704)).